A 212-amino-acid chain; its full sequence is Thymidylate kinase (212 aa).

10 to 17 (GIDGCGKT) provides a ligand contact to ATP.

Belongs to the thymidylate kinase family.

It carries out the reaction dTMP + ATP = dTDP + ADP. In terms of biological role, phosphorylation of dTMP to form dTDP in both de novo and salvage pathways of dTTP synthesis. The protein is Thymidylate kinase of Prochlorococcus marinus (strain MIT 9301).